The primary structure comprises 94 residues: Large ribosomal subunit protein uL23 (94 aa).

It belongs to the universal ribosomal protein uL23 family. Part of the 50S ribosomal subunit. Contacts protein L29, and trigger factor when it is bound to the ribosome.

One of the early assembly proteins it binds 23S rRNA. One of the proteins that surrounds the polypeptide exit tunnel on the outside of the ribosome. Forms the main docking site for trigger factor binding to the ribosome. The chain is Large ribosomal subunit protein uL23 from Lysinibacillus sphaericus (strain C3-41).